The primary structure comprises 426 residues: Glucose-6-phosphate isomerase (426 aa).

Glu276 functions as the Proton donor in the catalytic mechanism. Catalysis depends on residues His297 and Lys413.

Belongs to the GPI family.

The protein resides in the cytoplasm. It catalyses the reaction alpha-D-glucose 6-phosphate = beta-D-fructose 6-phosphate. It functions in the pathway carbohydrate biosynthesis; gluconeogenesis. Its pathway is carbohydrate degradation; glycolysis; D-glyceraldehyde 3-phosphate and glycerone phosphate from D-glucose: step 2/4. Functionally, catalyzes the reversible isomerization of glucose-6-phosphate to fructose-6-phosphate. The sequence is that of Glucose-6-phosphate isomerase from Mesoplasma florum (strain ATCC 33453 / NBRC 100688 / NCTC 11704 / L1) (Acholeplasma florum).